Here is a 700-residue protein sequence, read N- to C-terminus: DNA ligase (700 aa).

Residues 42–46 (DDEYD), 91–92 (SL), and glutamate 126 contribute to the NAD(+) site. The active-site N6-AMP-lysine intermediate is the lysine 128. Residues arginine 149, glutamate 184, lysine 300, and lysine 324 each coordinate NAD(+). Residues cysteine 418, cysteine 421, cysteine 436, and cysteine 441 each coordinate Zn(2+). Residues 598–686 (TRTDQLSGLN…GLGERGVAED (89 aa)) form the BRCT domain.

Belongs to the NAD-dependent DNA ligase family. LigA subfamily. Requires Mn(2+) as cofactor.

It carries out the reaction NAD(+) + (deoxyribonucleotide)n-3'-hydroxyl + 5'-phospho-(deoxyribonucleotide)m = (deoxyribonucleotide)n+m + AMP + beta-nicotinamide D-nucleotide.. DNA ligase that catalyzes the formation of phosphodiester linkages between 5'-phosphoryl and 3'-hydroxyl groups in double-stranded DNA using NAD as a coenzyme and as the energy source for the reaction. It is essential for DNA replication and repair of damaged DNA. The chain is DNA ligase from Deinococcus radiodurans (strain ATCC 13939 / DSM 20539 / JCM 16871 / CCUG 27074 / LMG 4051 / NBRC 15346 / NCIMB 9279 / VKM B-1422 / R1).